The primary structure comprises 295 residues: Acetyl-coenzyme A carboxylase carboxyl transferase subunit beta (295 aa).

The disordered stretch occupies residues 1 to 20 (MSWLSKLMPSGIRTENTPAK). A CoA carboxyltransferase N-terminal domain is found at 28–295 (LWEKCSNCGS…QPHPQDADAA (268 aa)). Cys32, Cys35, Cys51, and Cys54 together coordinate Zn(2+). Residues 32–54 (CSNCGSALYGPELEENLEVCPKC) form a C4-type zinc finger.

Belongs to the AccD/PCCB family. Acetyl-CoA carboxylase is a heterohexamer composed of biotin carboxyl carrier protein (AccB), biotin carboxylase (AccC) and two subunits each of ACCase subunit alpha (AccA) and ACCase subunit beta (AccD). Zn(2+) is required as a cofactor.

It localises to the cytoplasm. It catalyses the reaction N(6)-carboxybiotinyl-L-lysyl-[protein] + acetyl-CoA = N(6)-biotinyl-L-lysyl-[protein] + malonyl-CoA. Its pathway is lipid metabolism; malonyl-CoA biosynthesis; malonyl-CoA from acetyl-CoA: step 1/1. In terms of biological role, component of the acetyl coenzyme A carboxylase (ACC) complex. Biotin carboxylase (BC) catalyzes the carboxylation of biotin on its carrier protein (BCCP) and then the CO(2) group is transferred by the transcarboxylase to acetyl-CoA to form malonyl-CoA. The polypeptide is Acetyl-coenzyme A carboxylase carboxyl transferase subunit beta (Xanthomonas oryzae pv. oryzae (strain MAFF 311018)).